The primary structure comprises 148 residues: Ubiquitin-conjugating enzyme E2 29 (148 aa).

A UBC core domain is found at 1–147 (MATRRILKEL…ARSWTQKYAL (147 aa)). Residue Cys-85 is the Glycyl thioester intermediate of the active site.

Belongs to the ubiquitin-conjugating enzyme family.

It carries out the reaction S-ubiquitinyl-[E1 ubiquitin-activating enzyme]-L-cysteine + [E2 ubiquitin-conjugating enzyme]-L-cysteine = [E1 ubiquitin-activating enzyme]-L-cysteine + S-ubiquitinyl-[E2 ubiquitin-conjugating enzyme]-L-cysteine.. Its pathway is protein modification; protein ubiquitination. Accepts the ubiquitin from the E1 complex and catalyzes its covalent attachment to other proteins. This Arabidopsis thaliana (Mouse-ear cress) protein is Ubiquitin-conjugating enzyme E2 29 (UBC29).